The following is a 300-amino-acid chain: Porphobilinogen deaminase (300 aa).

The residue at position 242 (cysteine 242) is an S-(dipyrrolylmethanemethyl)cysteine.

The protein belongs to the HMBS family. Monomer. It depends on dipyrromethane as a cofactor.

It carries out the reaction 4 porphobilinogen + H2O = hydroxymethylbilane + 4 NH4(+). The protein operates within porphyrin-containing compound metabolism; protoporphyrin-IX biosynthesis; coproporphyrinogen-III from 5-aminolevulinate: step 2/4. Functionally, tetrapolymerization of the monopyrrole PBG into the hydroxymethylbilane pre-uroporphyrinogen in several discrete steps. This chain is Porphobilinogen deaminase, found in Rickettsia bellii (strain OSU 85-389).